We begin with the raw amino-acid sequence, 156 residues long: Extracellular giant hemoglobin major globin subunit A1 (156 aa).

Residues 1-16 form the signal peptide; it reads MKVLIIFACLVVMASA. Positions 17 to 156 constitute a Globin domain; it reads VCNRLEQILV…YERIASGISG (140 aa). Cys-18 and Cys-146 form a disulfide bridge. Residue Cys-79 participates in hydrogen sulfide binding. His-110 is a heme b binding site.

The protein belongs to the globin family. In terms of assembly, the 400 kDa hemoglobin consists of a spherical 24-mer arranged as a double layer of dome-shaped dodecamers. Each dodecamer is composed of the 3-fold trimer of the tetramer A1-A2-B1-B2 having one intra-tetramer (A1-B2) disulfide bond and one inter-tetramer (B1-B2) disulfide bond per tetramer.

It is found in the secreted. The extracellular giant hemoglobin is able to bind and transport oxygen and hydrosulfide simultaneously and reversibly at two different sites. The polypeptide is Extracellular giant hemoglobin major globin subunit A1 (ghbA1) (Oligobrachia mashikoi (Beard worm)).